Consider the following 975-residue polypeptide: Kinesin heavy chain (975 aa).

The 322-residue stretch at Ser12–Val333 folds into the Kinesin motor domain. Gly92–Thr99 contributes to the ATP binding site. Residues Val180 to Lys321 are microtubule-binding. Residues Asn335 to Lys931 are a coiled coil. The segment at Val810 to Cys891 is necessary for associating with milt. Residues His932–Ser975 are globular.

It belongs to the TRAFAC class myosin-kinesin ATPase superfamily. Kinesin family. Kinesin subfamily. In terms of assembly, oligomer composed of two heavy chains and two light chains.

The protein localises to the cytoplasm. It is found in the cytoskeleton. Its function is as follows. Kinesin is a microtubule-associated force-producing protein that may play a role in organelle transport. Milt and Miro form an essential protein complex that links Khc to mitochondria for light chain-independent, anterograde transport of mitochondria. This Drosophila melanogaster (Fruit fly) protein is Kinesin heavy chain (Khc).